A 167-amino-acid chain; its full sequence is Phosphopantetheine adenylyltransferase (167 aa).

Ser9 contacts substrate. ATP-binding positions include 9 to 10 and His17; that span reads SF. Residues Lys41, Val78, and Arg92 each contribute to the substrate site. Residues 93 to 95, Glu103, and 128 to 134 each bind ATP; these read GLR and SRPITAT.

Belongs to the bacterial CoaD family. In terms of assembly, homohexamer. Mg(2+) is required as a cofactor.

It localises to the cytoplasm. It catalyses the reaction (R)-4'-phosphopantetheine + ATP + H(+) = 3'-dephospho-CoA + diphosphate. It participates in cofactor biosynthesis; coenzyme A biosynthesis; CoA from (R)-pantothenate: step 4/5. Functionally, reversibly transfers an adenylyl group from ATP to 4'-phosphopantetheine, yielding dephospho-CoA (dPCoA) and pyrophosphate. The chain is Phosphopantetheine adenylyltransferase from Rhizobium rhizogenes (strain K84 / ATCC BAA-868) (Agrobacterium radiobacter).